Consider the following 78-residue polypeptide: Large ribosomal subunit protein bL28 (78 aa).

This sequence belongs to the bacterial ribosomal protein bL28 family.

This is Large ribosomal subunit protein bL28 from Prochlorococcus marinus (strain MIT 9301).